A 91-amino-acid polypeptide reads, in one-letter code: Uteroglobin (91 aa).

A signal peptide spans 1–21 (MKLAITITLAILALCCSPASA).

It belongs to the secretoglobin family. In terms of assembly, antiparallel homodimer; disulfide-linked. Interaction with LMBR1L is controversial. Club cells (nonciliated cells of the surface epithelium of the pulmonary airways). Expressed in lung, uterus, and prostate.

The protein localises to the secreted. Binds phosphatidylcholine, phosphatidylinositol, polychlorinated biphenyls (PCB) and weakly progesterone, potent inhibitor of phospholipase A2. This is Uteroglobin (SCGB1A1) from Equus caballus (Horse).